The primary structure comprises 343 residues: Calcium/calmodulin-dependent protein kinase type 1B (343 aa).

The region spanning 15–270 (YEIRERLGSG…CQQALRHLWI (256 aa)) is the Protein kinase domain. ATP contacts are provided by residues 21 to 29 (LGSGAFSEV) and Lys44. Residue Asp136 is the Proton acceptor of the active site. Residues 290–311 (KNFARTHWKRAFNATSFLRHIR) are calmodulin-binding. The disordered stretch occupies residues 319 to 343 (GEGASEQGMARHSHSGLRAGQPPKW).

Belongs to the protein kinase superfamily. CAMK Ser/Thr protein kinase family. CaMK subfamily. Post-translationally, phosphorylated by CAMKK1.

It is found in the cytoplasm. The protein resides in the nucleus. It carries out the reaction L-seryl-[protein] + ATP = O-phospho-L-seryl-[protein] + ADP + H(+). The catalysed reaction is L-threonyl-[protein] + ATP = O-phospho-L-threonyl-[protein] + ADP + H(+). With respect to regulation, activated by Ca(2+)/calmodulin. In terms of biological role, calcium/calmodulin-dependent protein kinase belonging to a proposed calcium-triggered signaling cascade. In vitro phosphorylates CREB1 and SYN1/synapsin I. Phosphorylates and activates CAMK1. In Homo sapiens (Human), this protein is Calcium/calmodulin-dependent protein kinase type 1B (PNCK).